Consider the following 340-residue polypeptide: Meiotic recombination protein DMC1/LIM15 homolog (340 aa).

Residue 126-133 (GEFRTGKT) participates in ATP binding. R230 lines the dsDNA pocket. Positions 230, 233, 236, 242, and 311 each coordinate ssDNA. The dsDNA site is built by R236 and R242.

The protein belongs to the RecA family. DMC1 subfamily. As to quaternary structure, double stacked ring-shaped homooctamer. Interacts with BRCA2. Interacts with the MND1-PSMC3IP heterodimer. Interacts with RAD51AP1; the interaction is direct and stimulates DMC1-mediated homologous recombination. In terms of tissue distribution, testis.

Its subcellular location is the nucleus. It localises to the chromosome. In terms of biological role, participates in meiotic recombination, specifically in homologous strand assimilation, which is required for the resolution of meiotic double-strand breaks. This Mus musculus (Mouse) protein is Meiotic recombination protein DMC1/LIM15 homolog.